We begin with the raw amino-acid sequence, 89 residues long: Small ribosomal subunit protein uS15 (89 aa).

A disordered region spans residues 1–24 (MSLNAETKAGIVEKYRRDPSDTGS). The span at 11–20 (IVEKYRRDPS) shows a compositional bias: basic and acidic residues.

It belongs to the universal ribosomal protein uS15 family. As to quaternary structure, part of the 30S ribosomal subunit. Forms a bridge to the 50S subunit in the 70S ribosome, contacting the 23S rRNA.

Functionally, one of the primary rRNA binding proteins, it binds directly to 16S rRNA where it helps nucleate assembly of the platform of the 30S subunit by binding and bridging several RNA helices of the 16S rRNA. Forms an intersubunit bridge (bridge B4) with the 23S rRNA of the 50S subunit in the ribosome. The polypeptide is Small ribosomal subunit protein uS15 (Thioalkalivibrio sulfidiphilus (strain HL-EbGR7)).